The primary structure comprises 616 residues: Chaperone protein HscA homolog (616 aa).

The protein belongs to the heat shock protein 70 family.

Probable chaperone. Has a low intrinsic ATPase activity which is markedly stimulated by HscB. The protein is Chaperone protein HscA homolog of Vibrio cholerae serotype O1 (strain ATCC 39315 / El Tor Inaba N16961).